Reading from the N-terminus, the 372-residue chain is UDP-N-acetylglucosamine--N-acetylmuramyl-(pentapeptide) pyrophosphoryl-undecaprenol N-acetylglucosamine transferase (372 aa).

Residues 15 to 17 (TGG), Asn126, Arg169, Ser197, and Gln299 each bind UDP-N-acetyl-alpha-D-glucosamine.

It belongs to the glycosyltransferase 28 family. MurG subfamily.

Its subcellular location is the cell inner membrane. It carries out the reaction di-trans,octa-cis-undecaprenyl diphospho-N-acetyl-alpha-D-muramoyl-L-alanyl-D-glutamyl-meso-2,6-diaminopimeloyl-D-alanyl-D-alanine + UDP-N-acetyl-alpha-D-glucosamine = di-trans,octa-cis-undecaprenyl diphospho-[N-acetyl-alpha-D-glucosaminyl-(1-&gt;4)]-N-acetyl-alpha-D-muramoyl-L-alanyl-D-glutamyl-meso-2,6-diaminopimeloyl-D-alanyl-D-alanine + UDP + H(+). It participates in cell wall biogenesis; peptidoglycan biosynthesis. Its function is as follows. Cell wall formation. Catalyzes the transfer of a GlcNAc subunit on undecaprenyl-pyrophosphoryl-MurNAc-pentapeptide (lipid intermediate I) to form undecaprenyl-pyrophosphoryl-MurNAc-(pentapeptide)GlcNAc (lipid intermediate II). The sequence is that of UDP-N-acetylglucosamine--N-acetylmuramyl-(pentapeptide) pyrophosphoryl-undecaprenol N-acetylglucosamine transferase from Methylobacterium sp. (strain 4-46).